We begin with the raw amino-acid sequence, 245 residues long: Triosephosphate isomerase (245 aa).

9–11 lines the substrate pocket; sequence NWK. Residue H92 is the Electrophile of the active site. The active-site Proton acceptor is the E164. Substrate contacts are provided by residues G170, S209, and 230 to 231; that span reads GG.

This sequence belongs to the triosephosphate isomerase family. Homodimer.

Its subcellular location is the cytoplasm. It carries out the reaction D-glyceraldehyde 3-phosphate = dihydroxyacetone phosphate. The protein operates within carbohydrate biosynthesis; gluconeogenesis. It functions in the pathway carbohydrate degradation; glycolysis; D-glyceraldehyde 3-phosphate from glycerone phosphate: step 1/1. Its function is as follows. Involved in the gluconeogenesis. Catalyzes stereospecifically the conversion of dihydroxyacetone phosphate (DHAP) to D-glyceraldehyde-3-phosphate (G3P). This Cupriavidus pinatubonensis (strain JMP 134 / LMG 1197) (Cupriavidus necator (strain JMP 134)) protein is Triosephosphate isomerase.